The primary structure comprises 346 residues: Methylthioribose-1-phosphate isomerase (346 aa).

Residues 46–48, Arg-89, and Gln-196 contribute to the substrate site; that span reads RGA. Residue Asp-237 is the Proton donor of the active site. Residue 247 to 248 coordinates substrate; the sequence is NK.

Belongs to the eIF-2B alpha/beta/delta subunits family. MtnA subfamily.

It carries out the reaction 5-(methylsulfanyl)-alpha-D-ribose 1-phosphate = 5-(methylsulfanyl)-D-ribulose 1-phosphate. Its pathway is amino-acid biosynthesis; L-methionine biosynthesis via salvage pathway; L-methionine from S-methyl-5-thio-alpha-D-ribose 1-phosphate: step 1/6. Functionally, catalyzes the interconversion of methylthioribose-1-phosphate (MTR-1-P) into methylthioribulose-1-phosphate (MTRu-1-P). The protein is Methylthioribose-1-phosphate isomerase of Geobacter sp. (strain M21).